The sequence spans 236 residues: Phosphoribosylaminoimidazole-succinocarboxamide synthase (236 aa).

This sequence belongs to the SAICAR synthetase family.

The enzyme catalyses 5-amino-1-(5-phospho-D-ribosyl)imidazole-4-carboxylate + L-aspartate + ATP = (2S)-2-[5-amino-1-(5-phospho-beta-D-ribosyl)imidazole-4-carboxamido]succinate + ADP + phosphate + 2 H(+). It functions in the pathway purine metabolism; IMP biosynthesis via de novo pathway; 5-amino-1-(5-phospho-D-ribosyl)imidazole-4-carboxamide from 5-amino-1-(5-phospho-D-ribosyl)imidazole-4-carboxylate: step 1/2. This Streptococcus equi subsp. zooepidemicus (strain MGCS10565) protein is Phosphoribosylaminoimidazole-succinocarboxamide synthase.